A 270-amino-acid polypeptide reads, in one-letter code: Outer membrane protein P.IIC (270 aa).

The signal sequence occupies residues 1 to 25 (MQPAKNLLFSSLLFSSLLFSSAARA). Over 26 to 35 (ASEDGGRGPY) the chain is Extracellular. The chain crosses the membrane as a beta stranded span at residues 36-44 (VQADLAYAA). The Periplasmic segment spans residues 45 to 76 (ERITHDYPKPTGTGKNKISTVSDYFRNIRTHS). Residues 77 to 85 (VHPRVSVGY) form a beta stranded membrane-spanning segment. At 86 to 89 (DFGS) the chain is on the extracellular side. A beta stranded membrane pass occupies residues 90–96 (WRIAADY). Residues 97 to 142 (ARYRKWNNNKYSVSIKELLRNDNSASGVRGHLNIQTQKTEHQENGT) lie on the Periplasmic side of the membrane. Residues 143-157 (FHAVSSLGLSTIYDF) form a beta stranded membrane-spanning segment. The Extracellular portion of the chain corresponds to 158 to 162 (DTGSR). The chain crosses the membrane as a beta stranded span at residues 163–173 (FKPYIGMRVAY). Topologically, residues 174–221 (GHVRHQVRSVEQETEIITTYPSNGGGKVSLSSKMPPKSAHHQSNSIRR) are periplasmic. The tract at residues 194-217 (PSNGGGKVSLSSKMPPKSAHHQSN) is disordered. Residues 222–234 (VGLGVIAGVGFDI) traverse the membrane as a beta stranded segment. Over 235 to 237 (TPN) the chain is Extracellular. A beta stranded membrane pass occupies residues 238-246 (LTLDTGYRY). Topologically, residues 247-261 (HNWGRLENTRFKTHE) are periplasmic. The chain crosses the membrane as a beta stranded span at residues 262 to 270 (ASLGMRYRF).

Belongs to the opacity porin family. In terms of assembly, homotrimer.

It is found in the cell outer membrane. Functionally, this protein serves as a porin. This is Outer membrane protein P.IIC (piiC) from Neisseria gonorrhoeae.